Consider the following 259-residue polypeptide: Submandibular glandular kallikrein-9 (259 aa).

The N-terminal stretch at 1–18 (MWFLILFLALSLGQIDAA) is a signal peptide. The propeptide at 19 to 24 (PPGQSR) is activation peptide. In terms of domain architecture, Peptidase S1 spans 25–256 (VVGGYNCETN…FTSWIKKVMK (232 aa)). Disulfide bonds link cysteine 31–cysteine 171, cysteine 48–cysteine 64, cysteine 150–cysteine 217, cysteine 182–cysteine 196, and cysteine 207–cysteine 232. Histidine 63 serves as the catalytic Charge relay system. Asparagine 106 carries an N-linked (GlcNAc...) asparagine glycan. Aspartate 118 serves as the catalytic Charge relay system. Catalysis depends on serine 211, which acts as the Charge relay system.

The protein belongs to the peptidase S1 family. Kallikrein subfamily. Heterodimer of a light chain and heavy chain linked by a disulfide bond.

The enzyme catalyses Preferential cleavage of Arg-|-Xaa bonds in small molecule substrates. Highly selective action to release kallidin (lysyl-bradykinin) from kininogen involves hydrolysis of Met-|-Xaa or Leu-|-Xaa.. Glandular kallikreins cleave Met-Lys and Arg-Ser bonds in kininogen to release Lys-bradykinin. This enzyme has a vasoconstrictor activity. KLK-9 has both a chymotrypsin-like and a trypsin-like properties. This is Submandibular glandular kallikrein-9 (Klk9) from Rattus norvegicus (Rat).